The chain runs to 516 residues: Extracellular endo-inulinase inuA (516 aa).

The N-terminal stretch at 1 to 25 is a signal peptide; that stretch reads MLNPKVAYMVWMTCLGLMLPSQAQS. Substrate is bound by residues 40–43, glutamine 59, tryptophan 67, and 99–100; these read WMNE and FT. Glutamate 43 is a catalytic residue. Asparagine 109 is a glycosylation site (N-linked (GlcNAc...) asparagine). 175 to 176 is a binding site for substrate; sequence RD. Asparagine 210 carries N-linked (GlcNAc...) asparagine glycosylation. Glutamate 233 contacts substrate. N-linked (GlcNAc...) asparagine glycans are attached at residues asparagine 372 and asparagine 419.

It belongs to the glycosyl hydrolase 32 family.

The protein resides in the secreted. The catalysed reaction is Endohydrolysis of (2-&gt;1)-beta-D-fructosidic linkages in inulin.. Its activity is regulated as follows. Activity is stimulated by Mn(2+), Fe(2+) Ca(2+) metal ions and DTT; and inhibited by glucose, Mg(2+), Zn(2+), Cu(2+), Hg(2+), Al(3+), and Fe(3+). In terms of biological role, endo-inulinase involved in utilization of the plant storage polymer inulin, consisting of fructooligosaccharides with a degree of polymerization (DP) value from 2 to 60. The sequence is that of Extracellular endo-inulinase inuA (inuA) from Aspergillus niger.